The following is a 64-amino-acid chain: Cytochrome c oxidase subunit 5C (64 aa).

The helical transmembrane segment at 16-34 threads the bilayer; it reads VVKELVIGFSLGLVAGGFW.

Belongs to the cytochrome c oxidase subunit 5C family. As to quaternary structure, sweet potato cytochrome C oxidase consists of at least seven different polypeptides species, subunits I, II, III, IV, Va, Vb, and Vc in order of MW.

Its subcellular location is the mitochondrion inner membrane. Functionally, this protein is one of the nuclear-coded polypeptide chains of cytochrome c oxidase, the terminal oxidase in mitochondrial electron transport. This chain is Cytochrome c oxidase subunit 5C (COX5C), found in Ipomoea batatas (Sweet potato).